We begin with the raw amino-acid sequence, 305 residues long: Transmembrane epididymal protein 1 (305 aa).

A helical membrane pass occupies residues 4-24 (FIGHISPGLFLVFYGLYQAII). Residue Asn32 is glycosylated (N-linked (GlcNAc...) asparagine). 6 helical membrane passes run 51 to 71 (LWQI…LIVY), 100 to 120 (LTMF…RSVL), 124 to 144 (LVLL…LLLV), 159 to 179 (SLLI…LWAP), 187 to 207 (IETF…FILF), and 223 to 243 (IMLV…CMLG). Residues 285 to 305 (EQQDRDDQAPLLSKSSPCDRA) are disordered.

This sequence belongs to the TMEM45 family.

The protein resides in the membrane. In Rattus norvegicus (Rat), this protein is Transmembrane epididymal protein 1 (Teddm1).